The following is an 86-amino-acid chain: Small ribosomal subunit protein uS17 (86 aa).

This sequence belongs to the universal ribosomal protein uS17 family. Part of the 30S ribosomal subunit.

Functionally, one of the primary rRNA binding proteins, it binds specifically to the 5'-end of 16S ribosomal RNA. In Lactococcus lactis subsp. cremoris (strain MG1363), this protein is Small ribosomal subunit protein uS17.